We begin with the raw amino-acid sequence, 154 residues long: Minor structural pilin EpdC (154 aa).

Positions 1–13 (MIKMLQLPFNKKG) are excised as a propeptide. The QXSXEXXXL motif lies at 14-24 (QVSFDFIIAML).

The N-terminus is cleaved by the prepilin peptidase EppA, which recognizes the class III signal sequence.

The protein resides in the secreted. Its subcellular location is the cell surface. It is found in the fimbrium. Its function is as follows. Minor component of the type IV-like pili. Essential for pili formation. This is Minor structural pilin EpdC from Methanococcus maripaludis (strain DSM 14266 / JCM 13030 / NBRC 101832 / S2 / LL).